Consider the following 59-residue polypeptide: UPF0391 membrane protein Geob_0344 (59 aa).

2 helical membrane-spanning segments follow: residues 4–24 and 33–53; these read WAAI…TGIA and FLFI…ITAG.

Belongs to the UPF0391 family.

The protein resides in the cell membrane. In Geotalea daltonii (strain DSM 22248 / JCM 15807 / FRC-32) (Geobacter daltonii), this protein is UPF0391 membrane protein Geob_0344.